Consider the following 355-residue polypeptide: N-acetyl-gamma-glutamyl-phosphate reductase (355 aa).

Cys-152 is a catalytic residue.

The protein belongs to the NAGSA dehydrogenase family. Type 1 subfamily.

The protein resides in the cytoplasm. The catalysed reaction is N-acetyl-L-glutamate 5-semialdehyde + phosphate + NADP(+) = N-acetyl-L-glutamyl 5-phosphate + NADPH + H(+). It functions in the pathway amino-acid biosynthesis; L-arginine biosynthesis; N(2)-acetyl-L-ornithine from L-glutamate: step 3/4. Catalyzes the NADPH-dependent reduction of N-acetyl-5-glutamyl phosphate to yield N-acetyl-L-glutamate 5-semialdehyde. The protein is N-acetyl-gamma-glutamyl-phosphate reductase of Psychrobacter sp. (strain PRwf-1).